The following is a 468-amino-acid chain: MYDELPPELWVKIVDYSGEIALLLTNTSFFELVSLINIKTDIIEYIVDNNLLDVLKYFVVLKNLKHNLIDGKIITLKSLNENLVKNCEKGNIEIIKYLLDIGADIEGKDNCAVLTASHHGHIEVVKYLVCKGANFRANNDKAVRWASDKGHLDVVKYLVSQGSDIRSENDCSICWASGNGHLEMVKYLVSQGVNIRTNDDWAIRLASENGHLEVVKYLVSQGADIRSQDDHAIKWASGNGHLEMVKYLVSQSSNIIAEDNYAVRWASENGHLEVIKYLVSQGSNITSNYYTIIAASKNGHIDIVKYLVSQGVNIRDCDSSAVQIASENGHLEVVKYLVSQGIDFREHDDLTFDMALRKGHVEIVKYLVGQGVDFRVYDDYPVRMASHCGRLGVVKYFVSQGADVRAEDDYAVRMSAEKGHIEVVKFLVDNGANIRADNDYAVRLASENGHIKIVEYLVSMGAVLNKKN.

14 ANK repeats span residues 38–68 (IKTDIIEYIVDNNLLDVLKYFVVLKNLKHNL), 78–107 (SLNENLVKNCEKGNIEIIKYLLDIGADIEG), 109–137 (DNCAVLTASHHGHIEVVKYLVCKGANFRA), 138–167 (NNDKAVRWASDKGHLDVVKYLVSQGSDIRS), 169–197 (NDCSICWASGNGHLEMVKYLVSQGVNIRT), 198–227 (NDDWAIRLASENGHLEVVKYLVSQGADIRS), 229–257 (DDHAIKWASGNGHLEMVKYLVSQSSNIIA), 258–287 (EDNYAVRWASENGHLEVIKYLVSQGSNITS), 289–316 (YYTIIAASKNGHIDIVKYLVSQGVNIRD), 317–346 (CDSSAVQIASENGHLEVVKYLVSQGIDFRE), 348–376 (DDLTFDMALRKGHVEIVKYLVGQGVDFRV), 378–406 (DDYPVRMASHCGRLGVVKYFVSQGADVRA), 407–436 (EDDYAVRMSAEKGHIEVVKFLVDNGANIRA), and 438–466 (NDYAVRLASENGHIKIVEYLVSMGAVLNK).

The protein is Putative ankyrin repeat protein R873 of Acanthamoeba polyphaga mimivirus (APMV).